The following is a 458-amino-acid chain: MSFDFIKDKNKHIHFIGIGGISMSGLAEILLYNNFSISGSDMNSSPITEKLKDKGAKIYIGHKKENVKNADLIVYTAAIASDNPEIIEAKEKNIKLMDRADFLGNLMKGYKYNIAISGTHGKTTTTSMLSHVALKANVDPTILVGGNLDIINGNVRVGESDFFITEACEYKSSFLKFFPYIGVILNIDADHLDYYKDLDDIKNAFSKFIKLIPKDGYLVAYGEDKNIQSIIKEANCNVITYGINSGDIQAHNIEYDEKACGNFDVVKDNQKLFSVKLNVPGKHNILNSLASICIGLASDMKDKDIIEGIESFFGTHRRFELKGCKNNITVIDDYAHHPTEISATLDAAKKYPHNKMFCVFQPHTYSRTLTLFDDFTKCFDNADEIILADIYAAREKDTGIINSNMLGDKLRERGLKCTNFHKFDDIKNYLIENAKDGDLILTVGAGDIYKVGEMYINL.

118–124 (GTHGKTT) provides a ligand contact to ATP.

It belongs to the MurCDEF family.

It localises to the cytoplasm. It catalyses the reaction UDP-N-acetyl-alpha-D-muramate + L-alanine + ATP = UDP-N-acetyl-alpha-D-muramoyl-L-alanine + ADP + phosphate + H(+). The protein operates within cell wall biogenesis; peptidoglycan biosynthesis. Functionally, cell wall formation. The polypeptide is UDP-N-acetylmuramate--L-alanine ligase (Clostridium botulinum (strain Okra / Type B1)).